The chain runs to 253 residues: tRNA (guanine-N(1)-)-methyltransferase (253 aa).

S-adenosyl-L-methionine is bound by residues G111 and 131–136; that span reads LGDFVL.

This sequence belongs to the RNA methyltransferase TrmD family. As to quaternary structure, homodimer.

It is found in the cytoplasm. It carries out the reaction guanosine(37) in tRNA + S-adenosyl-L-methionine = N(1)-methylguanosine(37) in tRNA + S-adenosyl-L-homocysteine + H(+). In terms of biological role, specifically methylates guanosine-37 in various tRNAs. The protein is tRNA (guanine-N(1)-)-methyltransferase of Synechococcus sp. (strain JA-3-3Ab) (Cyanobacteria bacterium Yellowstone A-Prime).